A 382-amino-acid polypeptide reads, in one-letter code: Anhydro-N-acetylmuramic acid kinase (382 aa).

Position 22–29 (22–29 (GTSMDGVD)) interacts with ATP.

The protein belongs to the anhydro-N-acetylmuramic acid kinase family.

It carries out the reaction 1,6-anhydro-N-acetyl-beta-muramate + ATP + H2O = N-acetyl-D-muramate 6-phosphate + ADP + H(+). It functions in the pathway amino-sugar metabolism; 1,6-anhydro-N-acetylmuramate degradation. The protein operates within cell wall biogenesis; peptidoglycan recycling. Catalyzes the specific phosphorylation of 1,6-anhydro-N-acetylmuramic acid (anhMurNAc) with the simultaneous cleavage of the 1,6-anhydro ring, generating MurNAc-6-P. Is required for the utilization of anhMurNAc either imported from the medium or derived from its own cell wall murein, and thus plays a role in cell wall recycling. The sequence is that of Anhydro-N-acetylmuramic acid kinase from Burkholderia cenocepacia (strain ATCC BAA-245 / DSM 16553 / LMG 16656 / NCTC 13227 / J2315 / CF5610) (Burkholderia cepacia (strain J2315)).